We begin with the raw amino-acid sequence, 99 residues long: Large ribosomal subunit protein uL23 (99 aa).

It belongs to the universal ribosomal protein uL23 family. Part of the 50S ribosomal subunit. Contacts protein L29, and trigger factor when it is bound to the ribosome.

Functionally, one of the early assembly proteins it binds 23S rRNA. One of the proteins that surrounds the polypeptide exit tunnel on the outside of the ribosome. Forms the main docking site for trigger factor binding to the ribosome. The protein is Large ribosomal subunit protein uL23 of Hydrogenobaculum sp. (strain Y04AAS1).